A 162-amino-acid polypeptide reads, in one-letter code: Class I hydrophobin 3 (162 aa).

Intrachain disulfides connect Cys-36/Cys-150 and Cys-151/Cys-159.

It belongs to the fungal hydrophobin family. As to quaternary structure, self-assembles to form functional amyloid fibrils called rodlets. Self-assembly into fibrillar rodlets occurs spontaneously at hydrophobic:hydrophilic interfaces and the rodlets further associate laterally to form amphipathic monolayers.

The protein localises to the secreted. It localises to the cell wall. Its function is as follows. Aerial growth, conidiation, and dispersal of filamentous fungi in the environment rely upon a capability of their secreting small amphipathic proteins called hydrophobins (HPBs) with low sequence identity. Class I can self-assemble into an outermost layer of rodlet bundles on aerial cell surfaces, conferring cellular hydrophobicity that supports fungal growth, development and dispersal; whereas Class II form highly ordered films at water-air interfaces through intermolecular interactions but contribute nothing to the rodlet structure. The sequence is that of Class I hydrophobin 3 from Coprinopsis cinerea (strain Okayama-7 / 130 / ATCC MYA-4618 / FGSC 9003) (Inky cap fungus).